Reading from the N-terminus, the 479-residue chain is Probable phosphatidate cytidylyltransferase (479 aa).

Residues 1–28 are compositionally biased toward basic and acidic residues; the sequence is MRTDNIRNRKEQLKKQEKKDFDSSKDEE. The disordered stretch occupies residues 1 to 71; it reads MRTDNIRNRK…NNNNNNNNIK (71 aa). At 1–108 the chain is on the cytoplasmic side; the sequence is MRTDNIRNRK…LAIRSVMGAF (108 aa). Positions 53 to 69 are enriched in low complexity; that stretch reads NKNIINQKTNNNNNNNN. A helical membrane pass occupies residues 109–129; the sequence is MIGFFTIVLSTDHFIVALFVI. Residues 130–159 lie on the Extracellular side of the membrane; the sequence is ALQLLVFKEMIALRYIEAKEKKIPHFRTLN. The chain crosses the membrane as a helical span at residues 160 to 180; the sequence is WFFLFTSFFFFYAKPILITLA. Over 181–192 the chain is Cytoplasmic; it reads NYYPDIFQHFVR. The chain crosses the membrane as a helical span at residues 193–213; it reads YHLWHSFSLYCIGFVLFILTL. Topologically, residues 214-240 are extracellular; sequence RKGVYRYQFSQLTWTLMILMMVVVQSN. A helical transmembrane segment spans residues 241-261; that stretch reads FLISNIYQGLIWFILPVSIIV. At 262 to 293 the chain is on the cytoplasmic side; the sequence is CNDIFAYFNGFFLGKKFINRPLMKISPNKTWE. Residues 294-314 traverse the membrane as a helical segment; sequence GFIGATGWTLLFAYYFCGFLL. Over 315 to 375 the chain is Extracellular; sequence KYDWIVCPKG…FTYIPIQFHA (61 aa). A helical transmembrane segment spans residues 376–396; that stretch reads LVLALFGSLIAPFGGFFASGI. Residues 397–479 lie on the Cytoplasmic side of the membrane; sequence KRAYKVKDFD…IEFTTGTITA (83 aa).

Belongs to the CDS family.

It localises to the membrane. It catalyses the reaction a 1,2-diacyl-sn-glycero-3-phosphate + CTP + H(+) = a CDP-1,2-diacyl-sn-glycerol + diphosphate. The protein operates within phospholipid metabolism; CDP-diacylglycerol biosynthesis; CDP-diacylglycerol from sn-glycerol 3-phosphate: step 3/3. The sequence is that of Probable phosphatidate cytidylyltransferase (cdsA) from Dictyostelium discoideum (Social amoeba).